Reading from the N-terminus, the 157-residue chain is Dihydrofolate reductase type 6 (157 aa).

The 155-residue stretch at 2–156 (KISLMAAVSE…IDYTYQIWAK (155 aa)) folds into the DHFR domain.

Belongs to the dihydrofolate reductase family. As to quaternary structure, homodimer.

The catalysed reaction is (6S)-5,6,7,8-tetrahydrofolate + NADP(+) = 7,8-dihydrofolate + NADPH + H(+). It participates in cofactor biosynthesis; tetrahydrofolate biosynthesis; 5,6,7,8-tetrahydrofolate from 7,8-dihydrofolate: step 1/1. Its function is as follows. Key enzyme in folate metabolism. Catalyzes an essential reaction for de novo glycine and purine synthesis, and for DNA precursor synthesis. The sequence is that of Dihydrofolate reductase type 6 (dhfrVI) from Proteus mirabilis.